The primary structure comprises 148 residues: MNSMKQKEAFLGVDYGKKRIGLAFASAPLLITLPIGSINTCSSLALTAQALITIIKERAVTTVVFGNPLPMQKSYASSVQSEIQELAALVRDMTSLEVILWDERLSSAQAERMLKNDCGLSRKQRKNSSDSLAATLILSSFLDSRKLY.

It belongs to the YqgF nuclease family.

The protein resides in the cytoplasm. Could be a nuclease involved in processing of the 5'-end of pre-16S rRNA. The protein is Putative pre-16S rRNA nuclease of Chlamydia muridarum (strain MoPn / Nigg).